Reading from the N-terminus, the 347-residue chain is NADH-ubiquinone oxidoreductase chain 2 (347 aa).

The next 11 helical transmembrane spans lie at 3-23, 25-45, 59-79, 96-116, 122-144, 149-171, 178-198, 202-222, 247-267, 276-296, and 326-346; these read PLIFTMIMLTVILGTTIVMMS, HWLMIWMGFEMNMLAVIPLLM, YFLTQATASMLLMLAVIINLL, IIMTLALGMKMGLAPFHFWVP, ISLSSGLILLTWQKLAPLSVLYV, INLDLILLMSMMSIAIGGWGGLN, ILAYSSIAHMGWMASILVFNP, LLNLLLYILMTTTTFMLFMVA, IMLSLGGLPPLTGFLPKWMII, ITLATLMAITALLNLFFYMRL, and LPVLIILSTITLPLAPAITLL.

This sequence belongs to the complex I subunit 2 family. As to quaternary structure, core subunit of respiratory chain NADH dehydrogenase (Complex I) which is composed of 45 different subunits. Interacts with TMEM242.

The protein localises to the mitochondrion inner membrane. It catalyses the reaction a ubiquinone + NADH + 5 H(+)(in) = a ubiquinol + NAD(+) + 4 H(+)(out). In terms of biological role, core subunit of the mitochondrial membrane respiratory chain NADH dehydrogenase (Complex I) which catalyzes electron transfer from NADH through the respiratory chain, using ubiquinone as an electron acceptor. Essential for the catalytic activity and assembly of complex I. This chain is NADH-ubiquinone oxidoreductase chain 2, found in Saccopteryx bilineata (Greater white-lined bat).